A 417-amino-acid chain; its full sequence is Serine hydroxymethyltransferase (417 aa).

Residues leucine 121 and glycine 125–leucine 127 each bind (6S)-5,6,7,8-tetrahydrofolate. Lysine 229 is modified (N6-(pyridoxal phosphate)lysine). (6S)-5,6,7,8-tetrahydrofolate is bound at residue serine 355–phenylalanine 357.

Belongs to the SHMT family. As to quaternary structure, homodimer. Pyridoxal 5'-phosphate serves as cofactor.

The protein localises to the cytoplasm. It carries out the reaction (6R)-5,10-methylene-5,6,7,8-tetrahydrofolate + glycine + H2O = (6S)-5,6,7,8-tetrahydrofolate + L-serine. The protein operates within one-carbon metabolism; tetrahydrofolate interconversion. It participates in amino-acid biosynthesis; glycine biosynthesis; glycine from L-serine: step 1/1. In terms of biological role, catalyzes the reversible interconversion of serine and glycine with tetrahydrofolate (THF) serving as the one-carbon carrier. This reaction serves as the major source of one-carbon groups required for the biosynthesis of purines, thymidylate, methionine, and other important biomolecules. Also exhibits THF-independent aldolase activity toward beta-hydroxyamino acids, producing glycine and aldehydes, via a retro-aldol mechanism. This chain is Serine hydroxymethyltransferase, found in Shewanella putrefaciens (strain CN-32 / ATCC BAA-453).